Reading from the N-terminus, the 306-residue chain is Ornithine carbamoyltransferase (306 aa).

Carbamoyl phosphate is bound by residues 53–56 (STRT), glutamine 80, arginine 104, and 131–134 (HPCQ). Residues asparagine 162, aspartate 219, and 223–224 (SM) each bind L-ornithine. Carbamoyl phosphate-binding positions include 259 to 260 (CL) and arginine 287.

The protein belongs to the aspartate/ornithine carbamoyltransferase superfamily. OTCase family.

The protein localises to the cytoplasm. It carries out the reaction carbamoyl phosphate + L-ornithine = L-citrulline + phosphate + H(+). Its pathway is amino-acid degradation; L-arginine degradation via ADI pathway; carbamoyl phosphate from L-arginine: step 2/2. Functionally, reversibly catalyzes the transfer of the carbamoyl group from carbamoyl phosphate (CP) to the N(epsilon) atom of ornithine (ORN) to produce L-citrulline. The protein is Ornithine carbamoyltransferase of Acinetobacter baumannii (strain AYE).